We begin with the raw amino-acid sequence, 373 residues long: MGSTANIQLATQSEDEERNCTYAMQLLSSSVLPFVLHSTIQLDVFDILAKDKAATKLSALEIVSHMPNCKNPDAATMLDRMLYVLASYSLLDCSVVEEGNGVTERRYGLSRVGKFFVRDEDGASMGPLLALLQDKVFINSWFELKDAVLEGGVPFDRVHGVHAFEYPKLDPKFNDVFNQAMINHTTVVMKRILENYKGFENLKTLVDVGGGLGVNLKMITSKYPTIKGTNFDLPHVVQHAPSYPGVDHVGGDMFESVPQGDAIFMKVMSKSLAEAWILHDWSDGHCLKLLKNCHKALPDNGKVIVVEANLPVKPDTDTTVVGVSQCDLIMMAQNPGGKERSEQEFRALASEAGFKGVNLICCVCNFWVMEFYK.

Residues Gly-209, Asp-232, Asp-252, Met-253, Met-265, and Lys-266 each contribute to the S-adenosyl-L-homocysteine site. S-adenosyl-L-methionine is bound at residue Asp-232. His-279 acts as the Proton acceptor in catalysis.

Belongs to the class I-like SAM-binding methyltransferase superfamily. Cation-independent O-methyltransferase family. COMT subfamily.

The enzyme catalyses catechol + S-adenosyl-L-methionine = guaiacol + S-adenosyl-L-homocysteine + H(+). In terms of biological role, O-methyltransferase that catalyzes the conversion of catechol to guaiacol. Involved in the production of guaiacol in fruits. The polypeptide is Cathecol O-methyltransferase 1 (Solanum lycopersicum (Tomato)).